The primary structure comprises 592 residues: Threonine dehydratase biosynthetic, chloroplastic (592 aa).

The transit peptide at 1 to 91 (MNSVQLPTAQ…NEAENGSIAE (91 aa)) directs the protein to the chloroplast. Lys141 carries the post-translational modification N6-(pyridoxal phosphate)lysine. ACT-like domains follow at residues 419–490 (AVLA…NLTT) and 512–583 (VLCR…LVSD).

This sequence belongs to the serine/threonine dehydratase family. Pyridoxal 5'-phosphate serves as cofactor.

The protein localises to the plastid. Its subcellular location is the chloroplast. The catalysed reaction is L-threonine = 2-oxobutanoate + NH4(+). It functions in the pathway amino-acid biosynthesis; L-isoleucine biosynthesis; 2-oxobutanoate from L-threonine: step 1/1. Allosterically inhibited by isoleucine. Strain GM11b is isoleucine feedback insensitive and is resistant to the antimetabolite L-O-methylthreonine. In terms of biological role, catalyzes the formation of alpha-ketobutyrate from threonine in a two-step reaction. The first step is a dehydration of threonine, followed by rehydration and liberation of ammonia. In Arabidopsis thaliana (Mouse-ear cress), this protein is Threonine dehydratase biosynthetic, chloroplastic (OMR1).